The sequence spans 372 residues: Chaperone protein DnaJ (372 aa).

One can recognise a J domain in the interval 5-70 (SYYDILGVSK…KKRQAYDQFG (66 aa)). The CR-type zinc-finger motif lies at 140–218 (GREYKIEIPR…CGGQGLQEKR (79 aa)). Zn(2+) is bound by residues cysteine 153, cysteine 156, cysteine 170, cysteine 173, cysteine 192, cysteine 195, cysteine 206, and cysteine 209. 4 CXXCXGXG motif repeats span residues 153–160 (CVDCNGSG), 170–177 (CPDCGGSG), 192–199 (CPTCRGKG), and 206–213 (CRSCGGQG).

It belongs to the DnaJ family. Homodimer. It depends on Zn(2+) as a cofactor.

The protein resides in the cytoplasm. Its function is as follows. Participates actively in the response to hyperosmotic and heat shock by preventing the aggregation of stress-denatured proteins and by disaggregating proteins, also in an autonomous, DnaK-independent fashion. Unfolded proteins bind initially to DnaJ; upon interaction with the DnaJ-bound protein, DnaK hydrolyzes its bound ATP, resulting in the formation of a stable complex. GrpE releases ADP from DnaK; ATP binding to DnaK triggers the release of the substrate protein, thus completing the reaction cycle. Several rounds of ATP-dependent interactions between DnaJ, DnaK and GrpE are required for fully efficient folding. Also involved, together with DnaK and GrpE, in the DNA replication of plasmids through activation of initiation proteins. In Leptospira interrogans serogroup Icterohaemorrhagiae serovar copenhageni (strain Fiocruz L1-130), this protein is Chaperone protein DnaJ.